Here is a 710-residue protein sequence, read N- to C-terminus: MFEKPVVKTFQYGNHTVTLETGVIARQATAAVMVTMDDTAVFVSVVGKKEAVEGQDFFPLTVNYQERTYAAGKIPGGFFKREGRPSEGETLTARLIDRPIRPLFPDAFKNEVQVIATVVSVNPDVQPDIPTMIGTSAALAISGIPFNGPIGAARVGHIDGQLVLNPSNTELEASKLDLVVAGTESAVLMVESEADNLTEEEMLSAVVFGHDQQQAVIKAINEFKAEVATPAWDWVAPAENTALVTKIAELAEAKLVEAYQITEKMARYDRIHEIAGEVNEVLLAEDPEANTKEIHTIFHDLEKTVVRRSIIAGNPRIDGREKDMVRALDVRTGVLPRTHGSSLFTRGETQALVTATLGTQRDAQIIDELTGERKDHFLLHYNFPPYCVGETGFVGSPKRREIGHGKLAKRGIAAVMPSVDEFPYTVRVVSEITESNGSSSMASVCGTSLALMDAGVPIKSSVAGIAMGLVKEGDDFVVLSDILGDEDHLGDMDFKVAGTNTGITALQMDIKIEGITKEIMQIALNQAQGARKHILSVMDEAISGAREDISEFAPRIHTMKISAEKIKDVIGKGGAVIRALTEETGTTIEIEDDGTIKIAATEGAAAKEAIRRIEEITAEVEVGRIYTGKVARLADFGAFVTVLPGKDGLVHISQIAEKRVEKVSDYLTEGQEVQVKVLEIDRQGRVRLSMKEAVEKPAEEANDASEAKGE.

D487 and D493 together coordinate Mg(2+). The KH domain occupies 554-613 (PRIHTMKISAEKIKDVIGKGGAVIRALTEETGTTIEIEDDGTIKIAATEGAAAKEAIRRI). The S1 motif domain occupies 623–691 (GRIYTGKVAR…RQGRVRLSMK (69 aa)). The interval 691–710 (KEAVEKPAEEANDASEAKGE) is disordered.

The protein belongs to the polyribonucleotide nucleotidyltransferase family. As to quaternary structure, component of the RNA degradosome, which is a multiprotein complex involved in RNA processing and mRNA degradation. The cofactor is Mg(2+).

It localises to the cytoplasm. It catalyses the reaction RNA(n+1) + phosphate = RNA(n) + a ribonucleoside 5'-diphosphate. Involved in mRNA degradation. Catalyzes the phosphorolysis of single-stranded polyribonucleotides processively in the 3'- to 5'-direction. The polypeptide is Polyribonucleotide nucleotidyltransferase (Vibrio campbellii (strain ATCC BAA-1116)).